Reading from the N-terminus, the 414-residue chain is Putative dipeptidase ARB_02715 (414 aa).

Positions 1–20 (MAALFVSLLALTSLVPVQGA) are cleaved as a signal peptide. Residues H45, D47, and E157 each coordinate Zn(2+). Residues C96 and C186 are joined by a disulfide bond. Residue H184 participates in substrate binding. The Zn(2+) site is built by H228 and H249. Substrate contacts are provided by R260 and D320. N-linked (GlcNAc...) asparagine glycosylation occurs at N392.

The protein belongs to the metallo-dependent hydrolases superfamily. Peptidase M19 family. The cofactor is Zn(2+).

It catalyses the reaction an L-aminoacyl-L-amino acid + H2O = 2 an L-alpha-amino acid. Functionally, hydrolyzes a wide range of dipeptides. This is Putative dipeptidase ARB_02715 from Arthroderma benhamiae (strain ATCC MYA-4681 / CBS 112371) (Trichophyton mentagrophytes).